The chain runs to 414 residues: Adenylosuccinate synthetase (414 aa).

Residues 12–18 (GDEGKGK) and 40–42 (GHT) contribute to the GTP site. Asp-13 functions as the Proton acceptor in the catalytic mechanism. Asp-13 and Gly-40 together coordinate Mg(2+). IMP-binding positions include 13 to 16 (DEGK), 38 to 41 (NAGH), Thr-124, Arg-138, Gln-216, Thr-231, and Arg-297. His-41 (proton donor) is an active-site residue. 293-299 (STTGRPR) serves as a coordination point for substrate. GTP-binding positions include Arg-299, 325–327 (KLD), and 403–405 (STG).

The protein belongs to the adenylosuccinate synthetase family. In terms of assembly, homodimer. Requires Mg(2+) as cofactor.

It is found in the cytoplasm. The catalysed reaction is IMP + L-aspartate + GTP = N(6)-(1,2-dicarboxyethyl)-AMP + GDP + phosphate + 2 H(+). The protein operates within purine metabolism; AMP biosynthesis via de novo pathway; AMP from IMP: step 1/2. Functionally, plays an important role in the de novo pathway of purine nucleotide biosynthesis. Catalyzes the first committed step in the biosynthesis of AMP from IMP. The chain is Adenylosuccinate synthetase from Hydrogenobaculum sp. (strain Y04AAS1).